We begin with the raw amino-acid sequence, 415 residues long: Small ribosomal subunit protein uS5m (415 aa).

A disordered region spans residues 1-31 (MRRSGPELWKTLTSVSKSGQKKGRRNTRQPV). The 67-residue stretch at 131 to 197 (FETYCLEVKR…GMASRKIFHV (67 aa)) folds into the S5 DRBM domain. Residues 396–415 (GVEPMPLGIGLSHVVPKKDD) are disordered.

The protein belongs to the universal ribosomal protein uS5 family. Component of the mitochondrial ribosome small subunit (28S) which comprises a 12S rRNA and about 30 distinct proteins.

The protein localises to the mitochondrion. The polypeptide is Small ribosomal subunit protein uS5m (mrps-5) (Caenorhabditis briggsae).